A 150-amino-acid chain; its full sequence is UPF0178 protein Reut_B5138 (150 aa).

Belongs to the UPF0178 family.

The sequence is that of UPF0178 protein Reut_B5138 from Cupriavidus pinatubonensis (strain JMP 134 / LMG 1197) (Cupriavidus necator (strain JMP 134)).